A 72-amino-acid polypeptide reads, in one-letter code: Large ribosomal subunit protein uL29 (72 aa).

This sequence belongs to the universal ribosomal protein uL29 family. In terms of assembly, part of the 50S ribosomal subunit.

This is Large ribosomal subunit protein uL29 from Pyrococcus furiosus (strain ATCC 43587 / DSM 3638 / JCM 8422 / Vc1).